The chain runs to 559 residues: 3-phosphoinositide-dependent protein kinase 1 (559 aa).

Y9 is modified (phosphotyrosine; by SRC and INSR). S25 bears the Phosphoserine mark. The interval 25–83 (SPSMVRSQTEPSSSPGIPSGVSRQGSTMDGTTAEARPSTNPLQQHPAQLPPQPRKKRPE) is disordered. Residues 35-46 (PSSSPGIPSGVS) show a composition bias toward low complexity. Residues 85-345 (FKFGKILGEG…YGPLKAHPFF (261 aa)) enclose the Protein kinase domain. Residues 95–97 (SFS) and K114 contribute to the ATP site. Positions 116–160 (LEKRHIIKENKVPYVTRERDVMSRLDHPFFVKLYFTFQDDEKLYF) are PIF-pocket. ATP contacts are provided by residues 163–165 (SYA) and E169. Catalysis depends on D208, which acts as the Proton acceptor. Residues E212 and D226 each coordinate ATP. Position 244 is a phosphoserine (S244). K307 carries the post-translational modification N6-acetyllysine. T357 carries the post-translational modification Phosphothreonine; by MELK. A phosphotyrosine; by SRC and INSR mark is found at Y376 and Y379. At S396 the chain carries Phosphoserine. At S397 the chain carries Phosphoserine; by MAP3K5. A Phosphoserine modification is found at S399. S401 carries the phosphoserine; by MAP3K5 modification. Position 413 is a phosphoserine (S413). The PH domain occupies 462 to 553 (KMGPVDKRKG…EVWRQQYQSS (92 aa)). At S504 the chain carries Phosphoserine; by PKC/PRKCQ. A Phosphothreonine; by autocatalysis modification is found at T516. S532 bears the Phosphoserine; by PKC/PRKCQ mark.

It belongs to the protein kinase superfamily. AGC Ser/Thr protein kinase family. PDPK1 subfamily. In terms of assembly, homodimer in its autoinhibited state. Active as monomer. Interacts with NPRL2, PPARG, PAK1, PTK2B, GRB14, PKN1 (via C-terminus), STRAP and IKKB. The Tyr-9 phosphorylated form interacts with SRC, RASA1 and CRK (via their SH2 domains). Interacts with SGK3 in a phosphorylation-dependent manner. The tyrosine-phosphorylated form interacts with PTPN6. The Ser-244 phosphorylated form interacts with YWHAH and YWHAQ. Binds INSR in response to insulin. Interacts (via PH domain) with SMAD3, SMAD4 and SMAD7. Interacts with PKN2; the interaction stimulates PDPK1 autophosphorylation, its PI(3,4,5)P3-dependent kinase activity toward 'Ser-473' of AKT1 but also activates its kinase activity toward PRKCD and PRKCZ. Post-translationally, phosphorylation on Ser-244 in the activation loop is required for full activity. PDPK1 itself can autophosphorylate Ser-244, leading to its own activation. Autophosphorylation is inhibited by the apoptotic C-terminus cleavage product of PKN2. Tyr-9 phosphorylation is critical for stabilization of both PDPK1 and the PDPK1/SRC complex via HSP90-mediated protection of PDPK1 degradation. Angiotensin II stimulates the tyrosine phosphorylation of PDPK1 in vascular smooth muscle in a calcium- and SRC-dependent manner. Phosphorylated on Tyr-9, Tyr-376 and Tyr-379 by INSR in response to insulin. Palmitate negatively regulates autophosphorylation at Ser-244 and palmitate-induced phosphorylation at Ser-532 and Ser-504 by PKC/PRKCQ negatively regulates its ability to phosphorylate PKB/AKT1. Phosphorylation at Thr-357 by MELK partially inhibits kinase activity, the inhibition is cooperatively enhanced by phosphorylation at Ser-397 and Ser-401 by MAP3K5. Monoubiquitinated in the kinase domain, deubiquitinated by USP4.

The protein localises to the cytoplasm. The protein resides in the nucleus. Its subcellular location is the cell membrane. It is found in the cell junction. It localises to the focal adhesion. The catalysed reaction is L-seryl-[protein] + ATP = O-phospho-L-seryl-[protein] + ADP + H(+). The enzyme catalyses L-threonyl-[protein] + ATP = O-phospho-L-threonyl-[protein] + ADP + H(+). Its activity is regulated as follows. Homodimerization regulates its activity by maintaining the kinase in an autoinhibitory conformation. NPRL2 down-regulates its activity by interfering with tyrosine phosphorylation at the Tyr-9, Tyr-376 and Tyr-379 residues. The 14-3-3 protein YWHAQ acts as a negative regulator by association with the residues surrounding the Ser-244 residue. STRAP positively regulates its activity by enhancing its autophosphorylation and by stimulating its dissociation from YWHAQ. SMAD2, SMAD3, SMAD4 and SMAD7 also positively regulate its activity by stimulating its dissociation from YWHAQ. Activated by phosphorylation on Tyr-9, Tyr-376 and Tyr-379 by INSR in response to insulin. Its function is as follows. Serine/threonine kinase which acts as a master kinase, phosphorylating and activating a subgroup of the AGC family of protein kinases. Its targets include: protein kinase B (PKB/AKT1, PKB/AKT2, PKB/AKT3), p70 ribosomal protein S6 kinase (RPS6KB1), p90 ribosomal protein S6 kinase (RPS6KA1, RPS6KA2 and RPS6KA3), cyclic AMP-dependent protein kinase (PRKACA), protein kinase C (PRKCD and PRKCZ), serum and glucocorticoid-inducible kinase (SGK1, SGK2 and SGK3), p21-activated kinase-1 (PAK1), TSSK3, protein kinase PKN (PKN1 and PKN2). Plays a central role in the transduction of signals from insulin by providing the activating phosphorylation to PKB/AKT1, thus propagating the signal to downstream targets controlling cell proliferation and survival, as well as glucose and amino acid uptake and storage. Negatively regulates the TGF-beta-induced signaling by: modulating the association of SMAD3 and SMAD7 with TGF-beta receptor, phosphorylating SMAD2, SMAD3, SMAD4 and SMAD7, preventing the nuclear translocation of SMAD3 and SMAD4 and the translocation of SMAD7 from the nucleus to the cytoplasm in response to TGF-beta. Activates PPARG transcriptional activity and promotes adipocyte differentiation. Activates the NF-kappa-B pathway via phosphorylation of IKKB. The tyrosine phosphorylated form is crucial for the regulation of focal adhesions by angiotensin II. Controls proliferation, survival, and growth of developing pancreatic cells. Participates in the regulation of Ca(2+) entry and Ca(2+)-activated K(+) channels of mast cells. Essential for the motility of vascular endothelial cells (ECs) and is involved in the regulation of their chemotaxis. Plays a critical role in cardiac homeostasis by serving as a dual effector for cell survival and beta-adrenergic response. Plays an important role during thymocyte development by regulating the expression of key nutrient receptors on the surface of pre-T cells and mediating Notch-induced cell growth and proliferative responses. Provides negative feedback inhibition to toll-like receptor-mediated NF-kappa-B activation in macrophages. The protein is 3-phosphoinositide-dependent protein kinase 1 (Pdpk1) of Rattus norvegicus (Rat).